The following is a 489-amino-acid chain: Endoglucanase 4 (489 aa).

The signal sequence occupies residues 1–25 (MAGKSFMTPAIMLAMLLLISPETYA). The active-site Nucleophile is the Asp-81. The active site involves His-409. A glycan (N-linked (GlcNAc...) asparagine) is linked at Asn-453. Catalysis depends on residues Asp-460 and Glu-469.

It belongs to the glycosyl hydrolase 9 (cellulase E) family.

It is found in the secreted. It catalyses the reaction Endohydrolysis of (1-&gt;4)-beta-D-glucosidic linkages in cellulose, lichenin and cereal beta-D-glucans.. This chain is Endoglucanase 4, found in Arabidopsis thaliana (Mouse-ear cress).